Consider the following 158-residue polypeptide: 2-C-methyl-D-erythritol 2,4-cyclodiphosphate synthase (158 aa).

Asp-8 and His-10 together coordinate a divalent metal cation. Residues 8–10 and 34–35 contribute to the 4-CDP-2-C-methyl-D-erythritol 2-phosphate site; these read DSH and HS. An a divalent metal cation-binding site is contributed by His-42. 4-CDP-2-C-methyl-D-erythritol 2-phosphate contacts are provided by residues 56-58, 61-65, and Arg-142; these read DIG and FPDND.

The protein belongs to the IspF family. As to quaternary structure, homotrimer. A divalent metal cation is required as a cofactor.

It carries out the reaction 4-CDP-2-C-methyl-D-erythritol 2-phosphate = 2-C-methyl-D-erythritol 2,4-cyclic diphosphate + CMP. It functions in the pathway isoprenoid biosynthesis; isopentenyl diphosphate biosynthesis via DXP pathway; isopentenyl diphosphate from 1-deoxy-D-xylulose 5-phosphate: step 4/6. In terms of biological role, involved in the biosynthesis of isopentenyl diphosphate (IPP) and dimethylallyl diphosphate (DMAPP), two major building blocks of isoprenoid compounds. Catalyzes the conversion of 4-diphosphocytidyl-2-C-methyl-D-erythritol 2-phosphate (CDP-ME2P) to 2-C-methyl-D-erythritol 2,4-cyclodiphosphate (ME-CPP) with a corresponding release of cytidine 5-monophosphate (CMP). The polypeptide is 2-C-methyl-D-erythritol 2,4-cyclodiphosphate synthase (Brachyspira hyodysenteriae (strain ATCC 49526 / WA1)).